Reading from the N-terminus, the 367-residue chain is Anhydro-N-acetylmuramic acid kinase (367 aa).

Residue 11–18 (GTSLDGVD) participates in ATP binding.

This sequence belongs to the anhydro-N-acetylmuramic acid kinase family.

The enzyme catalyses 1,6-anhydro-N-acetyl-beta-muramate + ATP + H2O = N-acetyl-D-muramate 6-phosphate + ADP + H(+). It participates in amino-sugar metabolism; 1,6-anhydro-N-acetylmuramate degradation. The protein operates within cell wall biogenesis; peptidoglycan recycling. In terms of biological role, catalyzes the specific phosphorylation of 1,6-anhydro-N-acetylmuramic acid (anhMurNAc) with the simultaneous cleavage of the 1,6-anhydro ring, generating MurNAc-6-P. Is required for the utilization of anhMurNAc either imported from the medium or derived from its own cell wall murein, and thus plays a role in cell wall recycling. This chain is Anhydro-N-acetylmuramic acid kinase, found in Rhodopseudomonas palustris (strain HaA2).